Reading from the N-terminus, the 454-residue chain is Zeatin O-xylosyltransferase (454 aa).

The protein belongs to the UDP-glycosyltransferase family. As to expression, high level in young seeds, less in older seeds and very low in roots.

The enzyme catalyses zeatin + UDP-alpha-D-xylose = O-beta-D-xylosylzeatin + UDP + H(+). Utilizes UDP-xylose as the sugar donor and catalyzes the formation of o-xylosylzeatin from zeatin. Does not act on UDP-glucose. In Phaseolus vulgaris (Kidney bean), this protein is Zeatin O-xylosyltransferase.